Consider the following 351-residue polypeptide: MSPRSCLRSLRLLVFAVFSAAASNWLYLAKLSSVGSISEEETCEKLKGLIQRQVQMCKRNLEVMDSVRRGAQLAIEECQYQFRNRRWNCSTLDSLPVFGKVVTQGTREAAFVYAISSAGVAFAVTRACSSGELEKCGCDRTVHGVSPQGFQWSGCSDNIAYGVAFSQSFVDVRERSKGASSSRALMNLHNNEAGRKAILTHMRVECKCHGVSGSCEVKTCWRAVPPFRQVGHALKEKFDGATEVEPRRVGSSRALVPRNAQFKPHTDEDLVYLEPSPDFCEQDIRSGVLGTRGRTCNKTSKAIDGCELLCCGRGFHTAQVELAERCGCRFHWCCFVKCRQCQRLVEMHTCR.

A signal peptide spans 1–22; sequence MSPRSCLRSLRLLVFAVFSAAA. Cystine bridges form between C78–C89, C128–C136, C138–C155, C206–C220, C208–C215, C280–C311, C296–C306, C310–C350, C326–C341, C328–C338, and C333–C334. N-linked (GlcNAc...) asparagine glycosylation occurs at N88. A lipid anchor (O-palmitoleoyl serine; by PORCN) is attached at S212. N-linked (GlcNAc...) asparagine glycosylation is present at N297.

Belongs to the Wnt family. Interacts with PORCN. Interacts with PKD1. In terms of processing, palmitoleoylation is required for efficient binding to frizzled receptors. Depalmitoleoylation leads to Wnt signaling pathway inhibition. In terms of tissue distribution, in adults in lung and brain.

It is found in the secreted. The protein localises to the extracellular space. Its subcellular location is the extracellular matrix. Functionally, ligand for members of the frizzled family of seven transmembrane receptors. Plays an important role in the embryonic development of the urogenital tract and the lung. Required for normal mesenchyme to epithelium transition during embryonic kidney development. Required for the formation of early epithelial renal vesicles during kidney development. Required for normal formation of the Mullerian duct in females, and normal levels of oocytes in the ovaries. Required for normal down-regulation of 3 beta-hydroxysteroid dehydrogenase in the ovary. Required for normal lung development and for normal patterning of trachael cartilage rings. This chain is Protein Wnt-4 (Wnt4), found in Mus musculus (Mouse).